The chain runs to 429 residues: Hydrogenobyrinate a,c-diamide synthase (429 aa).

Residues arginine 240–glutamate 429 enclose the GATase cobBQ-type domain. Catalysis depends on cysteine 323, which acts as the Nucleophile.

It belongs to the CobB/CbiA family. Mg(2+) serves as cofactor.

The enzyme catalyses hydrogenobyrinate + 2 L-glutamine + 2 ATP + 2 H2O = hydrogenobyrinate a,c-diamide + 2 L-glutamate + 2 ADP + 2 phosphate + 2 H(+). It functions in the pathway cofactor biosynthesis; adenosylcobalamin biosynthesis; cob(II)yrinate a,c-diamide from precorrin-2 (aerobic route): step 9/10. In terms of biological role, catalyzes the ATP-dependent amidation of the two carboxylate groups at positions a and c of hydrogenobyrinate, using either L-glutamine or ammonia as the nitrogen source. In Rhizobium meliloti (strain 1021) (Ensifer meliloti), this protein is Hydrogenobyrinate a,c-diamide synthase.